A 363-amino-acid chain; its full sequence is Peptide-N(4)-(N-acetyl-beta-glucosaminyl)asparagine amidase (363 aa).

Residues cysteine 129, cysteine 132, cysteine 165, and cysteine 168 each coordinate Zn(2+). Catalysis depends on cysteine 191, which acts as the Nucleophile. Active-site residues include histidine 218 and aspartate 235. Glutamate 238 serves as a coordination point for substrate. The tract at residues 325–363 is disordered; that stretch reads RGKTQETKSESVSAASKSSNRGRESGSADWKAQRGEDGK. The span at 334-343 shows a compositional bias: low complexity; it reads ESVSAASKSS. Residues 345–363 show a composition bias toward basic and acidic residues; sequence RGRESGSADWKAQRGEDGK.

Belongs to the transglutaminase-like superfamily. PNGase family. As to quaternary structure, interacts with RAD23 subunit of 26S proteasome. Requires Zn(2+) as cofactor.

The protein localises to the cytoplasm. The protein resides in the nucleus. The enzyme catalyses Hydrolysis of an N(4)-(acetyl-beta-D-glucosaminyl)asparagine residue in which the glucosamine residue may be further glycosylated, to yield a (substituted) N-acetyl-beta-D-glucosaminylamine and a peptide containing an aspartate residue.. With respect to regulation, inhibited by Z-VAD-fmk, a well-known caspase inhibitor. Also inhibited by Man9GlcNAc2-iodoacetoamide. Both molecules inhibit enzyme activity through covalent binding of the carbohydrate to the single Cys-191 residue. In terms of biological role, specifically deglycosylates the denatured form of N-linked glycoproteins in the cytoplasm and assists their proteasome-mediated degradation. Cleaves the beta-aspartyl-glucosamine (GlcNAc) of the glycan and the amide side chain of Asn, converting Asn to Asp. Prefers proteins containing high-mannose over those bearing complex type oligosaccharides. Can recognize misfolded proteins in the endoplasmic reticulum that are exported to the cytosol to be destroyed and deglycosylate them, while it has no activity toward native proteins. Deglycosylation is a prerequisite for subsequent proteasome-mediated degradation of some, but not all, misfolded glycoproteins. Involved in the formation of free oligosaccharide in cytosol. The polypeptide is Peptide-N(4)-(N-acetyl-beta-glucosaminyl)asparagine amidase (PNG1) (Saccharomyces cerevisiae (strain ATCC 204508 / S288c) (Baker's yeast)).